The chain runs to 101 residues: Protein Tat (101 aa).

Basic and acidic residues predominate over residues 1–10 (MEPVDPRLEP). Residues 1–20 (MEPVDPRLEPWNHPGSQPKT) form a disordered region. Residues 1–24 (MEPVDPRLEPWNHPGSQPKTACNN) are interaction with human CREBBP. The transactivation stretch occupies residues 1-48 (MEPVDPRLEPWNHPGSQPKTACNNCYCKRCCYHCLYCFTKKGLGISYG). Zn(2+) is bound by residues cysteine 22, cysteine 25, and cysteine 27. A cysteine-rich region spans residues 22–37 (CNNCYCKRCCYHCLYC). Lysine 28 bears the N6-acetyllysine; by host PCAF mark. The Zn(2+) site is built by cysteine 30, histidine 33, cysteine 34, and cysteine 37. The interval 38–48 (FTKKGLGISYG) is core. The span at 48–58 (GRKKRSQRRRT) shows a compositional bias: basic residues. The segment at 48–101 (GRKKRSQRRRTPQSSKSHQDLIPEQPLSQQQGDQTGQKKQKEALESKTEADPCD) is disordered. The short motif at 49–57 (RKKRSQRRR) is the Nuclear localization signal, RNA-binding (TAR), and protein transduction element. The interval 49-86 (RKKRSQRRRTPQSSKSHQDLIPEQPLSQQQGDQTGQKK) is interaction with the host capping enzyme RNGTT. N6-acetyllysine; by host EP300 and GCN5L2 occurs at positions 50 and 51. Arginine 52 is modified (asymmetric dimethylarginine; by host PRMT6). Over residues 86–101 (KQKEALESKTEADPCD) the composition is skewed to basic and acidic residues.

The protein belongs to the lentiviruses Tat family. In terms of assembly, interacts with host CCNT1. Associates with the P-TEFb complex composed at least of Tat, P-TEFb (CDK9 and CCNT1), TAR RNA, RNA Pol II. Recruits the HATs CREBBP, TAF1/TFIID, EP300, PCAF and GCN5L2. Interacts with host KAT5/Tip60; this interaction targets the latter to degradation. Interacts with the host deacetylase SIRT1. Interacts with host capping enzyme RNGTT; this interaction stimulates RNGTT. Binds to host KDR, and to the host integrins ITGAV/ITGB3 and ITGA5/ITGB1. Interacts with host KPNB1/importin beta-1 without previous binding to KPNA1/importin alpha-1. Interacts with EIF2AK2. Interacts with host nucleosome assembly protein NAP1L1; this interaction may be required for the transport of Tat within the nucleus, since the two proteins interact at the nuclear rim. Interacts with host C1QBP/SF2P32; this interaction involves lysine-acetylated Tat. Interacts with the host chemokine receptors CCR2, CCR3 and CXCR4. Interacts with host DPP4/CD26; this interaction may trigger an anti-proliferative effect. Interacts with host LDLR. Interacts with the host extracellular matrix metalloproteinase MMP1. Interacts with host PRMT6; this interaction mediates Tat's methylation. Interacts with, and is ubiquitinated by MDM2/Hdm2. Interacts with host PSMC3 and HTATIP2. Interacts with STAB1; this interaction may overcome SATB1-mediated repression of IL2 and IL2RA (interleukin) in T cells by binding to the same domain than HDAC1. Interacts (when acetylated) with human CDK13, thereby increasing HIV-1 mRNA splicing and promoting the production of the doubly spliced HIV-1 protein Nef. Interacts with host TBP; this interaction modulates the activity of transcriptional pre-initiation complex. Interacts with host RELA. Interacts with host PLSCR1; this interaction negatively regulates Tat transactivation activity by altering its subcellular distribution. In terms of processing, asymmetrical arginine methylation by host PRMT6 seems to diminish the transactivation capacity of Tat and affects the interaction with host CCNT1. Acetylation by EP300, CREBBP, GCN5L2/GCN5 and PCAF regulates the transactivation activity of Tat. EP300-mediated acetylation of Lys-50 promotes dissociation of Tat from the TAR RNA through the competitive binding to PCAF's bromodomain. In addition, the non-acetylated Tat's N-terminus can also interact with PCAF. PCAF-mediated acetylation of Lys-28 enhances Tat's binding to CCNT1. Lys-50 is deacetylated by SIRT1. Post-translationally, polyubiquitination by host MDM2 does not target Tat to degradation, but activates its transactivation function and fosters interaction with CCNT1 and TAR RNA. In terms of processing, phosphorylated by EIF2AK2 on serine and threonine residues adjacent to the basic region important for TAR RNA binding and function. Phosphorylation of Tat by EIF2AK2 is dependent on the prior activation of EIF2AK2 by dsRNA.

It localises to the host nucleus. Its subcellular location is the host nucleolus. The protein resides in the host cytoplasm. It is found in the secreted. Transcriptional activator that increases RNA Pol II processivity, thereby increasing the level of full-length viral transcripts. Recognizes a hairpin structure at the 5'-LTR of the nascent viral mRNAs referred to as the transactivation responsive RNA element (TAR) and recruits the cyclin T1-CDK9 complex (P-TEFb complex) that will in turn hyperphosphorylate the RNA polymerase II to allow efficient elongation. The CDK9 component of P-TEFb and other Tat-activated kinases hyperphosphorylate the C-terminus of RNA Pol II that becomes stabilized and much more processive. Other factors such as HTATSF1/Tat-SF1, SUPT5H/SPT5, and HTATIP2 are also important for Tat's function. Besides its effect on RNA Pol II processivity, Tat induces chromatin remodeling of proviral genes by recruiting the histone acetyltransferases (HATs) CREBBP, EP300 and PCAF to the chromatin. This also contributes to the increase in proviral transcription rate, especially when the provirus integrates in transcriptionally silent region of the host genome. To ensure maximal activation of the LTR, Tat mediates nuclear translocation of NF-kappa-B by interacting with host RELA. Through its interaction with host TBP, Tat may also modulate transcription initiation. Tat can reactivate a latently infected cell by penetrating in it and transactivating its LTR promoter. In the cytoplasm, Tat is thought to act as a translational activator of HIV-1 mRNAs. Its function is as follows. Extracellular circulating Tat can be endocytosed by surrounding uninfected cells via the binding to several surface receptors such as CD26, CXCR4, heparan sulfate proteoglycans (HSPG) or LDLR. Neurons are rarely infected, but they internalize Tat via their LDLR. Through its interaction with nuclear HATs, Tat is potentially able to control the acetylation-dependent cellular gene expression. Modulates the expression of many cellular genes involved in cell survival, proliferation or in coding for cytokines or cytokine receptors. Tat plays a role in T-cell and neurons apoptosis. Tat induced neurotoxicity and apoptosis probably contribute to neuroAIDS. Circulating Tat also acts as a chemokine-like and/or growth factor-like molecule that binds to specific receptors on the surface of the cells, affecting many cellular pathways. In the vascular system, Tat binds to ITGAV/ITGB3 and ITGA5/ITGB1 integrins dimers at the surface of endothelial cells and competes with bFGF for heparin-binding sites, leading to an excess of soluble bFGF. The sequence is that of Protein Tat from Homo sapiens (Human).